A 109-amino-acid polypeptide reads, in one-letter code: Parvalbumin alpha (109 aa).

2 EF-hand domains span residues 38–73 and 77–109; these read KSKEIMQKVFHVLDQDQSGFIEKEELCLILKGFTPE and LSDKETTALLAAGDKDGDGKIGVDEFVTLVSES. Residues aspartate 51, aspartate 53, serine 55, phenylalanine 57, glutamate 59, glutamate 62, aspartate 90, aspartate 92, aspartate 94, lysine 96, and glutamate 101 each contribute to the Ca(2+) site.

The protein belongs to the parvalbumin family.

In muscle, parvalbumin is thought to be involved in relaxation after contraction. It binds two calcium ions. The chain is Parvalbumin alpha from Pelophylax lessonae (Pool frog).